The sequence spans 608 residues: Glutamine--fructose-6-phosphate aminotransferase [isomerizing] (608 aa).

Residue C2 is the Nucleophile; for GATase activity of the active site. One can recognise a Glutamine amidotransferase type-2 domain in the interval 2–217; that stretch reads CGIVGIVGHK…DGDWAVVGKT (216 aa). SIS domains follow at residues 283 to 422 and 456 to 598; these read TDID…ARGT and LSRE…VDQP. K603 serves as the catalytic For Fru-6P isomerization activity.

It is found in the cytoplasm. It carries out the reaction D-fructose 6-phosphate + L-glutamine = D-glucosamine 6-phosphate + L-glutamate. Its function is as follows. Involved in the production of the root hair deformation (HAD) factor specifically on medicago. The chain is Glutamine--fructose-6-phosphate aminotransferase [isomerizing] (nodM) from Rhizobium leguminosarum bv. viciae.